The sequence spans 475 residues: MGSIAKEEQPSKVEKPTFSSKANTLEYAQSLDANDHMRRFRDQFIIPSKANIKATKLEKPGLSDESSIYFCGNSLGLQPKCVKEYLQAHLDTWSSIGVHGHFRDLEDSPLTQWQLLAEHASKQCAPIVGAKASEVAMMGTLTTNLHLLMASFYTPTPEKNKIIMEWKAFPSDHYAIESQIRGHGYNPQEAMVMIGPEEGSYEISTEKILRTIDEHASTTALVLLPGIQYYTGQLFDVKTITAYAQSKGLIVGWDLAHAAGNVPLQLHDWNVDFAVWCTYKYMNAGPGSIAGAFIHERHGEVDYSEGEEKPKYRHRLMGWYGGDQSCRFLMNNKFRPSPGASGYQVSNPSVVDLTSLCAALSIFNQTSMEEISQKTLHLTAYLEHLLLTSNPSNTNPAFRIITPSDPSARGTQLSVLLKPGRLETLSDMLEEAGIVADKRKPDVIRVAPVPLYNTYEDVWRFVQIFNAALEKCEEA.

Pyridoxal 5'-phosphate is bound by residues L141, T142, 169-172, D254, H257, and Y279; that span reads FPSD. An N6-(pyridoxal phosphate)lysine modification is found at K280. Pyridoxal 5'-phosphate-binding residues include W319 and N347.

It belongs to the kynureninase family. Homodimer. Requires pyridoxal 5'-phosphate as cofactor.

It is found in the cytoplasm. It catalyses the reaction L-kynurenine + H2O = anthranilate + L-alanine + H(+). The catalysed reaction is 3-hydroxy-L-kynurenine + H2O = 3-hydroxyanthranilate + L-alanine + H(+). It functions in the pathway amino-acid degradation; L-kynurenine degradation; L-alanine and anthranilate from L-kynurenine: step 1/1. Its pathway is cofactor biosynthesis; NAD(+) biosynthesis; quinolinate from L-kynurenine: step 2/3. Functionally, catalyzes the cleavage of L-kynurenine (L-Kyn) and L-3-hydroxykynurenine (L-3OHKyn) into anthranilic acid (AA) and 3-hydroxyanthranilic acid (3-OHAA), respectively. The protein is Kynureninase (bna5) of Sclerotinia sclerotiorum (strain ATCC 18683 / 1980 / Ss-1) (White mold).